The primary structure comprises 129 residues: Glycine cleavage system H protein (129 aa).

The Lipoyl-binding domain maps to 24-106 (IATIGISAFA…YGEGWLVKVR (83 aa)). Lys65 carries the N6-lipoyllysine modification.

The protein belongs to the GcvH family. In terms of assembly, the glycine cleavage system is composed of four proteins: P, T, L and H. The cofactor is (R)-lipoate.

The glycine cleavage system catalyzes the degradation of glycine. The H protein shuttles the methylamine group of glycine from the P protein to the T protein. In Cyanothece sp. (strain PCC 7425 / ATCC 29141), this protein is Glycine cleavage system H protein.